A 288-amino-acid chain; its full sequence is Probable chromosome 1-partitioning protein ParB (288 aa).

Belongs to the ParB family.

In terms of biological role, involved in chromosome partition. Localize to both poles of the predivisional cell following completion of DNA replication. Binds to the DNA origin of replication. This Deinococcus radiodurans (strain ATCC 13939 / DSM 20539 / JCM 16871 / CCUG 27074 / LMG 4051 / NBRC 15346 / NCIMB 9279 / VKM B-1422 / R1) protein is Probable chromosome 1-partitioning protein ParB (parB1).